The sequence spans 784 residues: Cadherin-5 (784 aa).

A signal peptide spans Met1–Ala24. A propeptide spanning residues Gly25–Arg45 is cleaved from the precursor. Cadherin domains follow at residues Asp46–Phe149, Ser150–Phe256, Thr257–Phe371, Gln372–Pro476, and Glu477–Gln593. Residues Asp46–Gln599 lie on the Extracellular side of the membrane. Ca(2+) contacts are provided by Glu56 and Glu57. An N-linked (GlcNAc...) asparagine glycan is attached at Asn59. Asp107, Glu109, Asp141, Ile142, Asn143, Asp144, and Asn145 together coordinate Ca(2+). N-linked (GlcNAc...) asparagine glycosylation occurs at Asn155. Positions 175, 177, 184, and 229 each coordinate Ca(2+). 3 N-linked (GlcNAc...) asparagine glycosylation sites follow: Asn441, Asn523, and Asn535. A helical membrane pass occupies residues Ala600–Leu620. The interval Arg621–Val660 is required for interaction with PALS1. At Arg621 to Ile784 the chain is on the cytoplasmic side.

In terms of assembly, part of a complex composed of AMOTL2, MAGI1 and CDH5, within the complex AMOTL2 acts as a scaffold protein for the interaction of MAGI1 with CDH5. The complex is required for coupling actin fibers to cell junctions in endothelial cells. Within the complex AMOTL2 (via its N-terminus) interacts with CDH5. Interacts (via cadherin 5 domain) with PTPRB. Interacts with TRPC4. Interacts with KRIT1. Interacts with PARD3. Interacts with RTN4 (isoform B). Interacts with PALS1; the interaction promotes PALS1 localization to cell junctions and is required for CDH5-mediated vascular lumen formation and endothelial cell polarity. Interacts with CTNND1/p120-catenin; the interaction controls CADH5 endocytosis. Post-translationally, phosphorylated on tyrosine residues by KDR/VEGFR-2. Dephosphorylated by PTPRB. In terms of processing, O-glycosylated. As to expression, expressed in postnatal endothelial cells of the retinal vascular plexus (at protein level).

The protein resides in the cell junction. The protein localises to the adherens junction. Its subcellular location is the cell membrane. It localises to the cytoplasm. In terms of biological role, cadherins are calcium-dependent cell adhesion proteins. They preferentially interact with themselves in a homophilic manner in connecting cells; cadherins may thus contribute to the sorting of heterogeneous cell types. This cadherin may play an important role in endothelial cell biology through control of the cohesion and organization of the intercellular junctions. It associates with alpha-catenin forming a link to the cytoskeleton. Plays a role in coupling actin fibers to cell junctions in endothelial cells, via acting as a cell junctional complex anchor for AMOTL2 and MAGI1. Acts in concert with KRIT1 and PALS1 to establish and maintain correct endothelial cell polarity and vascular lumen. These effects are mediated by recruitment and activation of the Par polarity complex and RAP1B. Required for activation of PRKCZ and for localization of phosphorylated PRKCZ, PARD3, TIAM1 and RAP1B to the cell junction. Associates with CTNND1/p120-catenin to control CADH5 endocytosis. In Mus musculus (Mouse), this protein is Cadherin-5.